The primary structure comprises 39 residues: Fructose 5-dehydrogenase [NADP(+)] (39 aa).

The catalysed reaction is D-fructose + NADP(+) = 5-dehydro-D-fructose + NADPH + H(+). This Erwinia citreus protein is Fructose 5-dehydrogenase [NADP(+)].